Here is a 420-residue protein sequence, read N- to C-terminus: Calreticulin (420 aa).

The first 25 residues, 1 to 25 (MAIRKGSSYAVAALLALASVAAVAG), serve as a signal peptide directing secretion. The N-linked (GlcNAc...) asparagine glycan is linked to asparagine 57. Tyrosine 115, lysine 117, tyrosine 134, and aspartate 141 together coordinate an alpha-D-glucoside. Tandem repeats lie at residues 197–208 (KHTGSIYEHWDI), 216–227 (DPEAKKPEDWDD), 233–244 (DPEDKKPEGYDD), 251–262 (DPDAKKPEDWDD), 266–276 (GEWTAPTIPNP), 280–290 (GPWKQKKIKNP), and 294–304 (GKWKAPMIDNP). A 4 X approximate repeats region spans residues 197 to 262 (KHTGSIYEHW…DAKKPEDWDD (66 aa)). Over residues 213-258 (KIKDPEAKKPEDWDDKEYIPDPEDKKPEGYDDIPKEIPDPDAKKPE) the composition is skewed to basic and acidic residues. Residues 213–285 (KIKDPEAKKP…PEYKGPWKQK (73 aa)) form a disordered region. Positions 266–304 (GEWTAPTIPNPEYKGPWKQKKIKNPNYQGKWKAPMIDNP) are 3 X approximate repeats. An alpha-D-glucoside is bound at residue glutamate 324. A compositionally biased stretch (basic and acidic residues) spans 355–381 (GKHKEAEKAAFDEAEKKKEEEDAAKGG). The tract at residues 355-420 (GKHKEAEKAA…DSDDEKHDEL (66 aa)) is disordered. Positions 382-402 (DDEDDDLEDEEDDEKADEDKA) are enriched in acidic residues. The segment covering 403–420 (DSDAEDGKDSDDEKHDEL) has biased composition (basic and acidic residues). A Prevents secretion from ER motif is present at residues 417–420 (HDEL).

The protein belongs to the calreticulin family.

The protein localises to the endoplasmic reticulum lumen. Functionally, molecular calcium-binding chaperone promoting folding, oligomeric assembly and quality control in the ER via the calreticulin/calnexin cycle. This lectin may interact transiently with almost all of the monoglucosylated glycoproteins that are synthesized in the ER. In Zea mays (Maize), this protein is Calreticulin (CRT).